Reading from the N-terminus, the 262-residue chain is 3-methyl-2-oxobutanoate hydroxymethyltransferase (262 aa).

Aspartate 42 and aspartate 81 together coordinate Mg(2+). 3-methyl-2-oxobutanoate-binding positions include aspartate 42–serine 43, aspartate 81, and lysine 110. Glutamate 112 contacts Mg(2+). The active-site Proton acceptor is the glutamate 180.

The protein belongs to the PanB family. Homodecamer; pentamer of dimers. Mg(2+) serves as cofactor.

The protein resides in the cytoplasm. It carries out the reaction 3-methyl-2-oxobutanoate + (6R)-5,10-methylene-5,6,7,8-tetrahydrofolate + H2O = 2-dehydropantoate + (6S)-5,6,7,8-tetrahydrofolate. It participates in cofactor biosynthesis; (R)-pantothenate biosynthesis; (R)-pantoate from 3-methyl-2-oxobutanoate: step 1/2. Catalyzes the reversible reaction in which hydroxymethyl group from 5,10-methylenetetrahydrofolate is transferred onto alpha-ketoisovalerate to form ketopantoate. This chain is 3-methyl-2-oxobutanoate hydroxymethyltransferase, found in Legionella pneumophila (strain Corby).